Consider the following 78-residue polypeptide: Large ribosomal subunit protein eL20 (78 aa).

Belongs to the eukaryotic ribosomal protein eL20 family. Part of the 50S ribosomal subunit. Binds 23S rRNA.

The polypeptide is Large ribosomal subunit protein eL20 (Pyrobaculum calidifontis (strain DSM 21063 / JCM 11548 / VA1)).